The primary structure comprises 593 residues: UvrABC system protein C (593 aa).

In terms of domain architecture, GIY-YIG spans 14–91; sequence DKPGCYLMKN…IKEHDPRYNV (78 aa). A UVR domain is found at 196–231; the sequence is EEMKQTLTEKMLQAAENMEFERAKEYRDQIKSIEAV.

Belongs to the UvrC family. In terms of assembly, interacts with UvrB in an incision complex.

The protein resides in the cytoplasm. Its function is as follows. The UvrABC repair system catalyzes the recognition and processing of DNA lesions. UvrC both incises the 5' and 3' sides of the lesion. The N-terminal half is responsible for the 3' incision and the C-terminal half is responsible for the 5' incision. The protein is UvrABC system protein C of Brevibacillus brevis (strain 47 / JCM 6285 / NBRC 100599).